A 311-amino-acid chain; its full sequence is Urease accessory protein UreD (311 aa).

Belongs to the UreD family. In terms of assembly, ureD, UreF and UreG form a complex that acts as a GTP-hydrolysis-dependent molecular chaperone, activating the urease apoprotein by helping to assemble the nickel containing metallocenter of UreC. The UreE protein probably delivers the nickel.

The protein localises to the cytoplasm. Required for maturation of urease via the functional incorporation of the urease nickel metallocenter. The protein is Urease accessory protein UreD of Synechococcus sp. (strain CC9902).